Reading from the N-terminus, the 314-residue chain is Formylglycine-generating enzyme (314 aa).

Residues 1-20 show a composition bias toward low complexity; it reads MAVAAPSPAAAAEPGPAARP. The tract at residues 1-31 is disordered; it reads MAVAAPSPAAAAEPGPAARPRSTRGQVRLPG. N194, I195, D208, and H210 together coordinate Ca(2+). The Cu(2+) site is built by C272 and C277.

The protein belongs to the sulfatase-modifying factor family. Cu(2+) is required as a cofactor.

The enzyme catalyses L-cysteinyl-[sulfatase] + 2 a thiol + O2 = an organic disulfide + 3-oxo-L-alanyl-[sulfatase] + hydrogen sulfide + H2O + H(+). It participates in protein modification; sulfatase oxidation. Its function is as follows. Oxidase that catalyzes the conversion of cysteine to 3-oxoalanine on target proteins. 3-oxoalanine modification, which is also named formylglycine (fGly), occurs in the maturation of arylsulfatases and some alkaline phosphatases that use the hydrated form of 3-oxoalanine as a catalytic nucleophile. In Streptomyces coelicolor (strain ATCC BAA-471 / A3(2) / M145), this protein is Formylglycine-generating enzyme.